Reading from the N-terminus, the 630-residue chain is Golgi apyrase (630 aa).

Topologically, residues 1–500 (MLIENTNDRF…RKQSSSLSNK (500 aa)) are lumenal. The active-site Proton acceptor is the glutamate 152. The helical transmembrane segment at 501–517 (GFLMWFAIICCIFYLIF) threads the bilayer. Residues 518–630 (HRSHIIRRRF…SKFKDSRLYD (113 aa)) are Cytoplasmic-facing. Residues 586–606 (SSATMQREHEPQRTASQSANL) are disordered.

It belongs to the GDA1/CD39 NTPase family. In terms of assembly, interacts with activator subunit VMA13 of vacuolar H(+)-ATPase. Interacts with CDC55; this interaction is disrupted by adenovirus E4orf4, which remains associated with both YND1 and CDC55. Ca(2+) serves as cofactor. Mg(2+) is required as a cofactor. The cofactor is Mn(2+).

The protein resides in the golgi apparatus. Its subcellular location is the membrane. The enzyme catalyses a ribonucleoside 5'-triphosphate + 2 H2O = a ribonucleoside 5'-phosphate + 2 phosphate + 2 H(+). It participates in protein modification; protein glycosylation. With respect to regulation, activity is inhibited both by interaction with VMA13 and by V-ATPase acidification of the lumen. The activity of VMA13 is not required for YND1 inhibition. Functionally, catalyzes the hydrolysis of phosphoanhydride bonds of nucleoside tri- and di-phosphates. Has equal high activity toward ADP/ATP, GDP/GTP, and UDP/UTP and approximately 50% less toward CDP/CTP and thiamine pyrophosphate. Has no activity toward GMP. Required for Golgi glycosylation and cell wall integrity. Together with CDC55, required for adenovirus E4orf4 (early region 4 open reading frame 4) induced toxicity, the apyrase activity is not required for this function. Plays a role in sphingolipid synthesis. In Saccharomyces cerevisiae (strain ATCC 204508 / S288c) (Baker's yeast), this protein is Golgi apyrase (YND1).